Consider the following 125-residue polypeptide: Large ribosomal subunit protein bL12 (125 aa).

It belongs to the bacterial ribosomal protein bL12 family. In terms of assembly, homodimer. Part of the ribosomal stalk of the 50S ribosomal subunit. Forms a multimeric L10(L12)X complex, where L10 forms an elongated spine to which 2 to 4 L12 dimers bind in a sequential fashion. Binds GTP-bound translation factors.

Functionally, forms part of the ribosomal stalk which helps the ribosome interact with GTP-bound translation factors. Is thus essential for accurate translation. This chain is Large ribosomal subunit protein bL12, found in Rhizobium johnstonii (strain DSM 114642 / LMG 32736 / 3841) (Rhizobium leguminosarum bv. viciae).